The chain runs to 161 residues: Phosphopantetheine adenylyltransferase (161 aa).

Threonine 9 contributes to the substrate binding site. ATP-binding positions include 9–10 (TF) and histidine 17. Lysine 41, leucine 73, and arginine 87 together coordinate substrate. Residues 88–90 (GLR), glutamate 98, and 123–129 (YQFISGT) each bind ATP.

This sequence belongs to the bacterial CoaD family. In terms of assembly, homohexamer. Mg(2+) is required as a cofactor.

Its subcellular location is the cytoplasm. It catalyses the reaction (R)-4'-phosphopantetheine + ATP + H(+) = 3'-dephospho-CoA + diphosphate. It functions in the pathway cofactor biosynthesis; coenzyme A biosynthesis; CoA from (R)-pantothenate: step 4/5. In terms of biological role, reversibly transfers an adenylyl group from ATP to 4'-phosphopantetheine, yielding dephospho-CoA (dPCoA) and pyrophosphate. The chain is Phosphopantetheine adenylyltransferase from Cupriavidus metallidurans (strain ATCC 43123 / DSM 2839 / NBRC 102507 / CH34) (Ralstonia metallidurans).